The following is a 403-amino-acid chain: uncharacterized protein (403 aa).

The next 6 membrane-spanning stretches (helical) occupy residues 31–51 (FLIA…IGSF), 186–206 (LPIG…GIIV), 238–258 (ISAV…PIII), 268–288 (LAIF…SLLC), 303–323 (LISP…TIMV), and 355–375 (LIEI…SFIL).

This sequence to B.subtilis YhaP.

Its subcellular location is the cell membrane. This is an uncharacterized protein from Methanocaldococcus jannaschii (strain ATCC 43067 / DSM 2661 / JAL-1 / JCM 10045 / NBRC 100440) (Methanococcus jannaschii).